The following is a 319-amino-acid chain: tRNA-cytidine(32) 2-sulfurtransferase (319 aa).

The PP-loop motif motif lies at 43–48 (SGGKDS). [4Fe-4S] cluster contacts are provided by C118, C121, and C209.

This sequence belongs to the TtcA family. Homodimer. It depends on Mg(2+) as a cofactor. [4Fe-4S] cluster serves as cofactor.

It localises to the cytoplasm. It carries out the reaction cytidine(32) in tRNA + S-sulfanyl-L-cysteinyl-[cysteine desulfurase] + AH2 + ATP = 2-thiocytidine(32) in tRNA + L-cysteinyl-[cysteine desulfurase] + A + AMP + diphosphate + H(+). The protein operates within tRNA modification. Functionally, catalyzes the ATP-dependent 2-thiolation of cytidine in position 32 of tRNA, to form 2-thiocytidine (s(2)C32). The sulfur atoms are provided by the cysteine/cysteine desulfurase (IscS) system. The chain is tRNA-cytidine(32) 2-sulfurtransferase from Neisseria gonorrhoeae (strain NCCP11945).